Consider the following 156-residue polypeptide: Endoribonuclease YbeY (156 aa).

Zn(2+)-binding residues include His117, His121, and His127.

The protein belongs to the endoribonuclease YbeY family. Requires Zn(2+) as cofactor.

Its subcellular location is the cytoplasm. Its function is as follows. Single strand-specific metallo-endoribonuclease involved in late-stage 70S ribosome quality control and in maturation of the 3' terminus of the 16S rRNA. The polypeptide is Endoribonuclease YbeY (Shewanella frigidimarina (strain NCIMB 400)).